The following is a 248-amino-acid chain: Triosephosphate isomerase (248 aa).

9–11 (NWK) contributes to the substrate binding site. The active-site Electrophile is His-94. Residue Glu-166 is the Proton acceptor of the active site. Residues Gly-172, Ser-212, and 233–234 (GG) each bind substrate.

The protein belongs to the triosephosphate isomerase family. As to quaternary structure, homodimer.

Its subcellular location is the cytoplasm. The enzyme catalyses D-glyceraldehyde 3-phosphate = dihydroxyacetone phosphate. It participates in carbohydrate biosynthesis; gluconeogenesis. It functions in the pathway carbohydrate degradation; glycolysis; D-glyceraldehyde 3-phosphate from glycerone phosphate: step 1/1. In terms of biological role, involved in the gluconeogenesis. Catalyzes stereospecifically the conversion of dihydroxyacetone phosphate (DHAP) to D-glyceraldehyde-3-phosphate (G3P). The protein is Triosephosphate isomerase of Clostridium acetobutylicum (strain ATCC 824 / DSM 792 / JCM 1419 / IAM 19013 / LMG 5710 / NBRC 13948 / NRRL B-527 / VKM B-1787 / 2291 / W).